A 237-amino-acid polypeptide reads, in one-letter code: UDP-Gal:alpha-D-GlcNAc-diphosphoundecaprenol beta-1,4-galactosyltransferase (237 aa).

The active-site Nucleophile is Glu-101.

It belongs to the glycosyltransferase 26 family. Requires Mn(2+) as cofactor. The cofactor is Ni(2+). Pb(2+) serves as cofactor.

It carries out the reaction N-acetyl-alpha-D-glucosaminyl-di-trans,octa-cis-undecaprenyl diphosphate + UDP-alpha-D-galactose = beta-D-Gal-(1-&gt;4)-alpha-D-GlcNAc-di-trans,octa-cis-undecaprenyl diphosphate + UDP + H(+). It functions in the pathway bacterial outer membrane biogenesis; LPS O-antigen biosynthesis. Galactosyltransferase that adds one galactose residue in the beta-1-4 linkage to GlcNAc-alpha-pyrophosphate-lipid in the biosynthesis of the O-polysaccharide repeating unit of the O antigen. The sequence is that of UDP-Gal:alpha-D-GlcNAc-diphosphoundecaprenol beta-1,4-galactosyltransferase (wfeD) from Shigella boydii.